Consider the following 274-residue polypeptide: Centromere protein K (274 aa).

Residues 1–21 form a disordered region; that stretch reads MSGYQHELPPNISKTSPAPEE. A coiled-coil region spans residues 96-159; it reads KEELEKIAQE…NQLTAFSEKR (64 aa).

It belongs to the CENP-K/MCM22 family.

The protein resides in the nucleus. It localises to the chromosome. It is found in the centromere. Its subcellular location is the kinetochore. Probable component of a centromeric complex involved in assembly of kinetochore proteins, mitotic progression and chromosome segregation. The polypeptide is Centromere protein K (cenpk) (Xenopus laevis (African clawed frog)).